The sequence spans 291 residues: Elongation factor Ts (291 aa).

The segment at 82–85 is involved in Mg(2+) ion dislocation from EF-Tu; it reads TDFC.

This sequence belongs to the EF-Ts family.

The protein localises to the cytoplasm. Its function is as follows. Associates with the EF-Tu.GDP complex and induces the exchange of GDP to GTP. It remains bound to the aminoacyl-tRNA.EF-Tu.GTP complex up to the GTP hydrolysis stage on the ribosome. In Methylobacillus flagellatus (strain ATCC 51484 / DSM 6875 / VKM B-1610 / KT), this protein is Elongation factor Ts.